A 305-amino-acid chain; its full sequence is 2-aminophenol 1,6-dioxygenase beta subunit (305 aa).

Fe cation contacts are provided by histidine 14, histidine 63, and histidine 196.

The protein belongs to the LigB/MhpB extradiol dioxygenase family. In terms of assembly, heterotetramer of 2 alpha and 2 beta subunits. Requires Fe(2+) as cofactor.

The catalysed reaction is 2-aminophenol + O2 = 2-aminomuconate 6-semialdehyde. Its activity is regulated as follows. Strongly inhibited by CuSO(4), FeCl(3), K(3)[Fe(CN)(6)], AgNO3, HgCl(2) and MnCl(2). Functionally, component of the 2-aminophenol 1,6-dioxygenase complex that catalyzes the ring fission of 2-aminophenol to produce 2-aminomuconic 6-semialdehyde. AmnB seems to be the catalytic subunit of the complex. The enzyme is also active toward 2-amino-p-cresol, 6-amino-m-cresol, 2-amino-m-cresol, 2-amino-4,5-dimethylphenol, 2-amino-4-chlorophenol, and catechol. This is 2-aminophenol 1,6-dioxygenase beta subunit (amnB) from Pseudomonas sp.